Consider the following 191-residue polypeptide: Pyridoxal 5'-phosphate synthase subunit PdxT (191 aa).

48-50 is an L-glutamine binding site; sequence GES. The Nucleophile role is filled by Cys-81. L-glutamine contacts are provided by residues Arg-109 and 136–137; that span reads IR. Active-site charge relay system residues include His-172 and Glu-174.

It belongs to the glutaminase PdxT/SNO family. As to quaternary structure, in the presence of PdxS, forms a dodecamer of heterodimers. Only shows activity in the heterodimer.

The enzyme catalyses aldehydo-D-ribose 5-phosphate + D-glyceraldehyde 3-phosphate + L-glutamine = pyridoxal 5'-phosphate + L-glutamate + phosphate + 3 H2O + H(+). It carries out the reaction L-glutamine + H2O = L-glutamate + NH4(+). It functions in the pathway cofactor biosynthesis; pyridoxal 5'-phosphate biosynthesis. Functionally, catalyzes the hydrolysis of glutamine to glutamate and ammonia as part of the biosynthesis of pyridoxal 5'-phosphate. The resulting ammonia molecule is channeled to the active site of PdxS. In Thermus thermophilus (strain ATCC 27634 / DSM 579 / HB8), this protein is Pyridoxal 5'-phosphate synthase subunit PdxT.